Reading from the N-terminus, the 347-residue chain is MTNAVQTHTPAARAKPKKAIQGEKLRGYDKVARIPIKIIPTVEAKKKPDWIRVKLSSPAEVARIKSTLREQKLYTVCEEAACPNLPQCFADGTATFMIMGDICTRRCPFCDVGHGRPNELDKDEPRHTAETIQGLGLKYAVITSVDRDDLKDGGAMHFVEVLNESRALSPNCLIEILVPDFRGRMDIALDLLTETAPDVFNHNIETVPRLYKAFRPGSDYQHSLDLLKIYKERRPDIATKCGFMVGLGETEEEIYKLLDDLKAHNVDMITVGQYLQPSKDHAPVDRYVHPDEFQRYMDYGKKIGFFNIWAGPMVRSSYFADRQYYGEDCPAPIRSKKALAAEGKLGC.

7 residues coordinate [4Fe-4S] cluster: C77, C82, C88, C103, C107, C110, and S317. In terms of domain architecture, Radical SAM core spans 89-306 (FADGTATFMI…MDYGKKIGFF (218 aa)).

It belongs to the radical SAM superfamily. Lipoyl synthase family. Requires [4Fe-4S] cluster as cofactor.

Its subcellular location is the cytoplasm. The enzyme catalyses [[Fe-S] cluster scaffold protein carrying a second [4Fe-4S](2+) cluster] + N(6)-octanoyl-L-lysyl-[protein] + 2 oxidized [2Fe-2S]-[ferredoxin] + 2 S-adenosyl-L-methionine + 4 H(+) = [[Fe-S] cluster scaffold protein] + N(6)-[(R)-dihydrolipoyl]-L-lysyl-[protein] + 4 Fe(3+) + 2 hydrogen sulfide + 2 5'-deoxyadenosine + 2 L-methionine + 2 reduced [2Fe-2S]-[ferredoxin]. Its pathway is protein modification; protein lipoylation via endogenous pathway; protein N(6)-(lipoyl)lysine from octanoyl-[acyl-carrier-protein]: step 2/2. In terms of biological role, catalyzes the radical-mediated insertion of two sulfur atoms into the C-6 and C-8 positions of the octanoyl moiety bound to the lipoyl domains of lipoate-dependent enzymes, thereby converting the octanoylated domains into lipoylated derivatives. The chain is Lipoyl synthase from Psychrobacter cryohalolentis (strain ATCC BAA-1226 / DSM 17306 / VKM B-2378 / K5).